The chain runs to 364 residues: Geranylfarnesyl diphosphate synthase, chloroplastic (364 aa).

The N-terminal 51 residues, 1 to 51 (MSHCTIFLYKYFPGKPRYQHCSFLHPLNHKLKSLFLPITGSRFLSNSTFSV), are a transit peptide targeting the chloroplast. 3 residues coordinate isopentenyl diphosphate: K72, K111, and H143. Mg(2+)-binding residues include D150 and D156. R161 lines the dimethylallyl diphosphate pocket. Residue R162 coordinates isopentenyl diphosphate. Residues K249, T250, Q287, D294, K304, and K314 each contribute to the dimethylallyl diphosphate site.

This sequence belongs to the FPP/GGPP synthase family. In terms of assembly, monomer. Requires Mg(2+) as cofactor. As to expression, strongly expressed in glandular trichomes, and, at low levels, in leaves, stems and flowers.

Its subcellular location is the plastid. The protein localises to the chloroplast. It catalyses the reaction isopentenyl diphosphate + (2E,6E,10E)-geranylgeranyl diphosphate = (2E,6E,10E,14E)-geranylfarnesyl diphosphate + diphosphate. The catalysed reaction is 2 isopentenyl diphosphate + (2E,6E)-farnesyl diphosphate = (2E,6E,10E,14E)-geranylfarnesyl diphosphate + 2 diphosphate. The enzyme catalyses 3 isopentenyl diphosphate + (2E)-geranyl diphosphate = (2E,6E,10E,14E)-geranylfarnesyl diphosphate + 3 diphosphate. It carries out the reaction 4 isopentenyl diphosphate + dimethylallyl diphosphate = (2E,6E,10E,14E)-geranylfarnesyl diphosphate + 4 diphosphate. Its pathway is secondary metabolite biosynthesis; terpenoid biosynthesis. It participates in isoprenoid biosynthesis. Functionally, involved in the biosynthesis of leucosceptrane sesterterpenoids natural products, which are playing defensive roles toward herbivorus insects (e.g. Spodoptera exigua). Catalyzes the condensation of isopentenyl pyrophosphate (IDP) with the allylic pyrophosphates to yield geranylfarnesyl diphosphate (GFDP), the C(25) prenyl diphosphate precursor to all sesterterpenoids. Geranylgeranyl diphosphate (GGPP) is the preferred substrate, however dimethylallyl diphosphate (DMADP), farnesyl diphosphate (FDP) and geranyl diphosphate (GDP) can also be used as allylic substrate. The polypeptide is Geranylfarnesyl diphosphate synthase, chloroplastic (Leucosceptrum canum (Hairy white-wand)).